The primary structure comprises 213 residues: GTP cyclohydrolase 1 (213 aa).

Residues Cys104, His107, and Cys175 each contribute to the Zn(2+) site.

Belongs to the GTP cyclohydrolase I family. In terms of assembly, homomer.

The enzyme catalyses GTP + H2O = 7,8-dihydroneopterin 3'-triphosphate + formate + H(+). It participates in cofactor biosynthesis; 7,8-dihydroneopterin triphosphate biosynthesis; 7,8-dihydroneopterin triphosphate from GTP: step 1/1. This Brucella canis (strain ATCC 23365 / NCTC 10854 / RM-666) protein is GTP cyclohydrolase 1.